The following is a 234-amino-acid chain: Sugar fermentation stimulation protein A (234 aa).

Residues Leu201 to Ser220 constitute a DNA-binding region (H-T-H motif).

It belongs to the SfsA family.

Binds to DNA non-specifically. Could be a regulatory factor involved in maltose metabolism. This chain is Sugar fermentation stimulation protein A, found in Salmonella typhi.